Consider the following 317-residue polypeptide: Probable cell division protein WhiA (317 aa).

Residues 281–314 (TLKELGEMINPPIGKSGVNHRLRKLDQIADRERG) constitute a DNA-binding region (H-T-H motif).

Belongs to the WhiA family.

Functionally, involved in cell division and chromosome segregation. The chain is Probable cell division protein WhiA from Alkaliphilus metalliredigens (strain QYMF).